Here is an 82-residue protein sequence, read N- to C-terminus: UPF0291 protein LJ_1507 (82 aa).

Residues 61-82 form a disordered region; sequence DGKEVTSEKAKEAQRRKGLRKD.

This sequence belongs to the UPF0291 family.

The protein resides in the cytoplasm. This is UPF0291 protein LJ_1507 from Lactobacillus johnsonii (strain CNCM I-12250 / La1 / NCC 533).